A 514-amino-acid polypeptide reads, in one-letter code: JmjC domain-containing histone demethylation protein 1 (514 aa).

A PHD-type zinc finger spans residues 4 to 62 (IDTCPICVESPLEDSTTFNNIAWLQCDICNQWFHASCLKIPKIEVNNLHSYHCEGCSKS). One can recognise a JmjC domain in the interval 220 to 384 (SDVDSFGKSF…MHLRIYEIEK (165 aa)). Thr-267 provides a ligand contact to substrate. 2 residues coordinate Fe cation: His-270 and Asp-272. Lys-287 contributes to the substrate binding site. His-352 is a Fe cation binding site. A compositionally biased stretch (basic and acidic residues) spans 432–454 (KSEAHSRGEVHTKTETHAVKDEP). A disordered region spans residues 432 to 456 (KSEAHSRGEVHTKTETHAVKDEPQP).

It belongs to the JHDM1 histone demethylase family. Fe(2+) serves as cofactor.

Its subcellular location is the nucleus. The catalysed reaction is N(6),N(6)-dimethyl-L-lysyl(36)-[histone H3] + 2 2-oxoglutarate + 2 O2 = L-lysyl(36)-[histone H3] + 2 formaldehyde + 2 succinate + 2 CO2. Functionally, histone demethylase that specifically demethylates 'Lys-36' of histone H3, thereby playing a central role in histone code. This Debaryomyces hansenii (strain ATCC 36239 / CBS 767 / BCRC 21394 / JCM 1990 / NBRC 0083 / IGC 2968) (Yeast) protein is JmjC domain-containing histone demethylation protein 1 (JHD1).